Here is a 515-residue protein sequence, read N- to C-terminus: 1-pyrroline-5-carboxylate dehydrogenase (515 aa).

Active-site residues include glutamate 286 and cysteine 320.

This sequence belongs to the aldehyde dehydrogenase family. RocA subfamily.

The enzyme catalyses L-glutamate 5-semialdehyde + NAD(+) + H2O = L-glutamate + NADH + 2 H(+). Its pathway is amino-acid degradation; L-proline degradation into L-glutamate; L-glutamate from L-proline: step 2/2. In Oceanobacillus iheyensis (strain DSM 14371 / CIP 107618 / JCM 11309 / KCTC 3954 / HTE831), this protein is 1-pyrroline-5-carboxylate dehydrogenase.